The following is a 360-amino-acid chain: Phospho-N-acetylmuramoyl-pentapeptide-transferase (360 aa).

10 consecutive transmembrane segments (helical) span residues 27–47, 71–91, 94–114, 132–152, 168–188, 199–219, 236–256, 263–283, 288–308, and 338–358; these read IVSL…MIAF, TPTM…LLWV, NNPY…VGFV, WKYF…YSFG, VMPQ…VGTS, GLAI…AWAT, AGEL…FLWF, VFMG…IAVL, FLLV…ILQV, and VIVR…ATLK.

Belongs to the glycosyltransferase 4 family. MraY subfamily. It depends on Mg(2+) as a cofactor.

It is found in the cell inner membrane. The enzyme catalyses UDP-N-acetyl-alpha-D-muramoyl-L-alanyl-gamma-D-glutamyl-meso-2,6-diaminopimeloyl-D-alanyl-D-alanine + di-trans,octa-cis-undecaprenyl phosphate = di-trans,octa-cis-undecaprenyl diphospho-N-acetyl-alpha-D-muramoyl-L-alanyl-D-glutamyl-meso-2,6-diaminopimeloyl-D-alanyl-D-alanine + UMP. It participates in cell wall biogenesis; peptidoglycan biosynthesis. In terms of biological role, catalyzes the initial step of the lipid cycle reactions in the biosynthesis of the cell wall peptidoglycan: transfers peptidoglycan precursor phospho-MurNAc-pentapeptide from UDP-MurNAc-pentapeptide onto the lipid carrier undecaprenyl phosphate, yielding undecaprenyl-pyrophosphoryl-MurNAc-pentapeptide, known as lipid I. This is Phospho-N-acetylmuramoyl-pentapeptide-transferase from Photorhabdus laumondii subsp. laumondii (strain DSM 15139 / CIP 105565 / TT01) (Photorhabdus luminescens subsp. laumondii).